A 224-amino-acid polypeptide reads, in one-letter code: Response regulator protein GraR (224 aa).

The 114-residue stretch at 2 to 115 (QILLVEDDNT…VLIAKLQAIY (114 aa)) folds into the Response regulatory domain. At D51 the chain carries 4-aspartylphosphate. The ompR/PhoB-type DNA-binding region spans 126–224 (KRTLTWQDAV…KVGKGYMAHE (99 aa)). A phosphothreonine mark is found at T128, T130, and T149.

Interacts with GraX. In terms of processing, phosphorylated by GraS. Phosphorylated by Stk1; phosphorylation increases the DNA-binding activity of GraR.

The protein resides in the cytoplasm. Member of the two-component regulatory system GraR/GraS involved in resistance against cationic antimicrobial peptides (CAMPs). Upon phosphorylation by GraS, functions as a transcription regulator by direct binding to promoter regions of target genes such as adhesins, exoproteins, transporters, toxins, and proteins involved in cell wall synthesis. Down-regulates the expression of many genes involved in RNA and amino acid synthesis or glycolysis. The polypeptide is Response regulator protein GraR (graR) (Staphylococcus aureus (strain Mu50 / ATCC 700699)).